The sequence spans 585 residues: Glutathione S-transferase C-terminal domain-containing protein homolog (585 aa).

The GST C-terminal domain occupies 120 to 275 (LGFKGSCLLA…DKCARVLRDL (156 aa)).

This sequence belongs to the GSTCD family.

The polypeptide is Glutathione S-transferase C-terminal domain-containing protein homolog (Drosophila melanogaster (Fruit fly)).